A 559-amino-acid polypeptide reads, in one-letter code: MRWIVASAWPYINAVPHLGTLVQVLSSDVFARFLRKMGEEVVFVSGSDEHGTPIEIEAIRKGIAPRDLTDKMHAYITWLFESFGISYDNYTRTESDVHKEFVRDFYLKVYNEGHIFERETEQLYCPKDEMFLPDRFVTGTCPYCGYERAHGDQCDRCGRLLNPTDLIDPKCSICGSVPEMRRTKHWFFDLPKFSERLRKYIEENENLPENAKTLSLSMIEEGLRPRSLTRDNKWGIPAPFPGSEGKTIYVWMEAVLGYVSAVKEYFLKRGEAERFEEFWKSGDTRSVYFIGKDNIPFHTIIFPALLMASGEGYALPFSVASTEFLLYEGEKFSKSERRGIWMDEALQLLPADYWRFYMIYMRPELKDASFSWEDFESKVNDELNDTIGNLVHRILSFIASRYSGQIPSVELDEEASGFLMRVREIGREIEENLMKIKLRDALRSLIEMARLGNKFFNNREPWKDFESNRGRADSTILASYILLKILAFYMHIFMPSSAEKLWKMLGLEGEPEDRVAFSYHDNGKVSSLEPLFRKIKKEELINRLNQIRERGEVLSARES.

The short motif at 10-20 is the 'HIGH' region element; it reads PYINAVPHLGT. Residues Cys141, Cys144, Cys154, and Cys157 each contribute to the Zn(2+) site. A 'KMSKS' region motif is present at residues 331–335; sequence KFSKS. Lys334 is an ATP binding site.

It belongs to the class-I aminoacyl-tRNA synthetase family. MetG type 1 subfamily. It depends on Zn(2+) as a cofactor.

The protein localises to the cytoplasm. It carries out the reaction tRNA(Met) + L-methionine + ATP = L-methionyl-tRNA(Met) + AMP + diphosphate. Is required not only for elongation of protein synthesis but also for the initiation of all mRNA translation through initiator tRNA(fMet) aminoacylation. The polypeptide is Methionine--tRNA ligase (Korarchaeum cryptofilum (strain OPF8)).